Consider the following 209-residue polypeptide: Translation initiation factor IF-3 (209 aa).

It belongs to the IF-3 family. In terms of assembly, monomer.

It localises to the cytoplasm. In terms of biological role, IF-3 binds to the 30S ribosomal subunit and shifts the equilibrium between 70S ribosomes and their 50S and 30S subunits in favor of the free subunits, thus enhancing the availability of 30S subunits on which protein synthesis initiation begins. The protein is Translation initiation factor IF-3 of Chlorobium phaeovibrioides (strain DSM 265 / 1930) (Prosthecochloris vibrioformis (strain DSM 265)).